The primary structure comprises 1104 residues: Protein KIBRA (1104 aa).

2 WW domains span residues 6 to 39 (LPLPEGWEEARDFDGKVYYIDHRNRTTSWIDPRD) and 53 to 86 (DELPLGWEEAYDPQVGDYFIDHNTKTTQIEDPRV). Residues 107–193 (LSAQKEIYQV…ELQFKERGFQ (87 aa)) adopt a coiled-coil conformation. Ser141 bears the Phosphoserine mark. Disordered stretches follow at residues 429–449 (SMQSLSSGSSPGSLTSSRGSL) and 509–547 (TQKAEGGSRLQALRSLSGTPRSMTSLSPRSSLSSPSPPC). The segment covering 527 to 542 (TPRSMTSLSPRSSLSS) has biased composition (low complexity). Ser535 is subject to Phosphoserine. A Phosphoserine; by CDK1 modification is found at Ser542. In terms of domain architecture, C2 spans 659–782 (GATRVQIALK…RSGERSTRWY (124 aa)). Positions 822 to 949 (LEKRQEGRSS…DSSTLSKKPP (128 aa)) are disordered. The interaction with histone H3 stretch occupies residues 836–1104 (EGSWTYEEEA…NIPALSADDV (269 aa)). Residues 841–862 (YEEEASENEAVAEEEEEGEEDV) are compositionally biased toward acidic residues. 3 positions are modified to phosphoserine: Ser887, Ser891, and Ser919. Residues 916–930 (IIRSKTFSPGPQSQY) show a composition bias toward polar residues. Thr921 is modified (phosphothreonine). Position 923 is a phosphoserine; by CDK1 (Ser923). Position 939 is a phosphoserine (Ser939). Interaction with PRKCZ regions lie at residues 945 to 988 (SKKP…LDLQ) and 948 to 967 (PPFVRNSLERRSVRMKRPSS). Residues Ser967 and Ser970 each carry the phosphoserine; by PKC/PRKCZ modification. Residues 994–1024 (HSQLTQEISVLKELKEHLEQAKNHGEKELPQ) are a coiled coil. The ADDV motif signature appears at 1102-1104 (DDV).

Belongs to the WWC family. KIBRA subfamily. As to quaternary structure, homodimer. Forms heterodimers with WWC2 and WWC3. Interacts with DDN. Interacts with DYNLL1 and histone H3. The interaction with DYNLL1 is mandatory for the recruitment and transactivation functions of ESR1 or DYNLL1 to the target chromatin and the interaction with histone H3 ensures proper regulatory interaction of WWC1-DYNLL1-ESR1 complexes with target chromatin. Interacts (via WW domains) with DDR1 (via PPxY motif) in a collagen-regulated manner. Interacts with PRKCZ (via the protein kinase domain). Forms a tripartite complex with DDR1 and PRKCZ, but predominantly in the absence of collagen. Interacts (via the ADDV motif) with PATJ (via PDZ domain 8). Interacts (via WW domains) with SYNPO (via PPxY motifs). Interacts with NF2 and SNX4. Interacts with CCDC141; retains AMPAR in the cytosol after internalization. Interacts with DLC1 and PRKCZ. Interacts (via WW domains) with LATS1 and LATS2. In terms of processing, phosphorylation at Ser-542 and Ser-923 by CDK1 in response to spindle damage stress regulates mitotic exit, these two sites are dephosphorylated by CDC14B. In terms of tissue distribution, mammary epithelium.

It localises to the cytoplasm. It is found in the perinuclear region. The protein localises to the nucleus. Its subcellular location is the cell projection. The protein resides in the ruffle membrane. It localises to the cytosol. In terms of biological role, regulator of the Hippo signaling pathway, also known as the Salvador-Warts-Hippo (SWH) pathway. Enhances phosphorylation of LATS1 and YAP1 and negatively regulates cell proliferation and organ growth due to a suppression of the transcriptional activity of YAP1, the major effector of the Hippo pathway. Along with NF2 can synergistically induce the phosphorylation of LATS1 and LATS2 and function in the regulation of Hippo signaling pathway. Acts as a transcriptional coactivator of ESR1 which plays an essential role in DYNLL1-mediated ESR1 transactivation. Modulates directional migration of podocytes. May be associated with memory performance. Regulates collagen-stimulated activation of the ERK/MAPK cascade. Plays an important role in regulating AMPA-selective glutamate receptors (AMPARs) trafficking. The protein is Protein KIBRA (Wwc1) of Mus musculus (Mouse).